Reading from the N-terminus, the 654-residue chain is MEVAMVSAESSGCNSHMPYGYAAQARARERERLAHSRAAAAAAVAAATAAVEGTGGSGGGPHHHHQTRGAYSSHDPQGSRGSRRRRRQRTEKKKLHHRQSSFPHCSDLMPSGSEEKILRELSEEEEDEEEEEEEEEEGRFYYSEEDHGDGCSYTDLLPQDDGGGGGYSSVRYSDCCERVVINVSGLRFETQMKTLAQFPETLLGDPEKRTQYFDPLRNEYFFDRNRPSFDAILYYYQSGGRLKRPVNVPFDIFTEEVKFYQLGEEALLKFREDEGFVREEEDRALPENEFKKQIWLLFEYPESSSPARGIAIVSVLVILISIVIFCLETLPEFRDDRDLIMALSAGGHSRLLNDTSAPHLENSGHTIFNDPFFIVETVCIVWFSFEFVVRCFACPSQALFFKNIMNIIDIVSILPYFITLGTDLAQQQGGGNGQQQQAMSFAILRIIRLVRVFRIFKLSRHSKGLQILGHTLRASMRELGLLIFFLFIGVILFSSAVYFAEADEPTTHFQSIPDAFWWAVVTMTTVGYGDMKPITVGGKIVGSLCAIAGVLTIALPVPVIVSNFNYFYHRETENEEQTQLTQNAVSCPYLPSNLLKKFRSSTSSSLGDKSEYLEMEEGVKESLCGKEEKCQGKGDESETDKNNCSNAKAVETDV.

Over 1-305 the chain is Cytoplasmic; the sequence is MEVAMVSAES…LLFEYPESSS (305 aa). Residues 24–145 form a disordered region; that stretch reads QARARERERL…EEGRFYYSEE (122 aa). Low complexity predominate over residues 36 to 50; sequence SRAAAAAAVAAATAA. Positions 81–99 are enriched in basic residues; it reads GSRRRRRQRTEKKKLHHRQ. S122 bears the Phosphoserine mark. The segment covering 122–137 has biased composition (acidic residues); sequence SEEEEDEEEEEEEEEE. A helical membrane pass occupies residues 306–327; it reads PARGIAIVSVLVILISIVIFCL. Over 328 to 371 the chain is Extracellular; it reads ETLPEFRDDRDLIMALSAGGHSRLLNDTSAPHLENSGHTIFNDP. N-linked (GlcNAc...) asparagine glycosylation occurs at N353. The chain crosses the membrane as a helical span at residues 372-393; it reads FFIVETVCIVWFSFEFVVRCFA. Residues 394 to 404 lie on the Cytoplasmic side of the membrane; that stretch reads CPSQALFFKNI. The chain crosses the membrane as a helical span at residues 405–425; it reads MNIIDIVSILPYFITLGTDLA. The Extracellular segment spans residues 426–440; sequence QQQGGGNGQQQQAMS. The helical; Voltage-sensor transmembrane segment at 441-461 threads the bilayer; that stretch reads FAILRIIRLVRVFRIFKLSRH. Residues 462–476 are Cytoplasmic-facing; it reads SKGLQILGHTLRASM. Positions 463-476 are S4-S5 linker; that stretch reads KGLQILGHTLRASM. A helical membrane pass occupies residues 477 to 498; that stretch reads RELGLLIFFLFIGVILFSSAVY. At 499–512 the chain is on the extracellular side; sequence FAEADEPTTHFQSI. Positions 513–524 form an intramembrane region, helical; the sequence is PDAFWWAVVTMT. The short motif at 525 to 530 is the Selectivity filter element; it reads TVGYGD. The stretch at 525 to 532 is an intramembrane region; sequence TVGYGDMK. The Extracellular portion of the chain corresponds to 533–539; that stretch reads PITVGGK. A helical membrane pass occupies residues 540-568; that stretch reads IVGSLCAIAGVLTIALPVPVIVSNFNYFY. The Cytoplasmic portion of the chain corresponds to 569-654; sequence HRETENEEQT…SNAKAVETDV (86 aa). At S600 the chain carries Phosphoserine; by PKA. The segment covering 630–641 has biased composition (basic and acidic residues); sequence CQGKGDESETDK. Residues 630–654 are disordered; the sequence is CQGKGDESETDKNNCSNAKAVETDV. The PDZ-binding signature appears at 652 to 654; it reads TDV.

It belongs to the potassium channel family. A (Shaker) (TC 1.A.1.2) subfamily. Kv1.4/KCNA4 sub-subfamily. In terms of assembly, homotetramer and heterotetramer of potassium channel proteins. Interacts with KCNAB1 and KCNAB2. Interacts with DLG1, DLG2 and DLG4 via their PDZ domains. Interacts with SIGMAR1. Detected in a complex with KCNA1. Interacts with KCNA2. Part of a complex containing KCNA1, KCNAB1 and LGI1. Interacts (via cytoplasmic N-terminal domain) with KCNRG. Expressed in the brain, lens and retina.

Its subcellular location is the cell membrane. It localises to the cell projection. It is found in the axon. The catalysed reaction is K(+)(in) = K(+)(out). In terms of biological role, voltage-gated potassium channel that mediates transmembrane potassium transport in excitable membranes. Forms tetrameric potassium-selective channels through which potassium ions pass in accordance with their electrochemical gradient. The channel alternates between opened and closed conformations in response to the voltage difference across the membrane. Can form functional homotetrameric channels and heterotetrameric channels that contain variable proportions of KCNA1, KCNA2, KCNA4, KCNA5, and possibly other family members as well; channel properties depend on the type of alpha subunits that are part of the channel. Channel properties are modulated by cytoplasmic beta subunits that regulate the subcellular location of the alpha subunits and promote rapid inactivation. In vivo, membranes probably contain a mixture of heteromeric potassium channel complexes, making it difficult to assign currents observed in intact tissues to any particular potassium channel family member. Homotetrameric KCNA4 forms a potassium channel that opens in response to membrane depolarization, followed by rapid spontaneous channel closure. Likewise, a heterotetrameric channel formed by KCNA1 and KCNA4 shows rapid inactivation. The protein is Potassium voltage-gated channel subfamily A member 4 (Kcna4) of Mus musculus (Mouse).